The chain runs to 391 residues: MRKMLATVLSQVFSGMVQKPALRGLLSSLKFSNDATCDIKKCDLYLLEQGPPTSTVLTREEALKYYRNMQVIRRMELKADQLYKQKFIRGFCHLCDGQEACNVGLEAGINPTDHIITSYRAHGLCYTRGLSVKSILAELTGRKGGCAKGKGGSMHMYAKNFYGGNGIVGAQVPLGAGVALACKYLKNGQICLALYGDGAANQGQVFEAYNMSALWKLPCVFICENNRYGMGTAIERSAASTDYHKKGFVIPGLRVNGMDILSVREATKFAADHCRSGKGPIVMELQTYRYHGHSMSDPGISYRTREEVQNVRSKSDPIMLLRERMISNNLSSVEELKEIDADVKKEVEEAAQFATTDPEPPLEDLANYLYHQNPPFEVRGAHKWLKFKSVS.

The N-terminal 30 residues, 1–30, are a transit peptide targeting the mitochondrion; that stretch reads MRKMLATVLSQVFSGMVQKPALRGLLSSLK. Positions 93, 119, 120, 158, 166, 168, 197, 198, 199, 226, and 228 each coordinate pyruvate. Y119 and R120 together coordinate thiamine diphosphate. Thiamine diphosphate is bound by residues G166, V168, D197, G198, A199, and N226. Position 197 (D197) interacts with Mg(2+). Mg(2+) contacts are provided by N226 and Y228. H293 contacts thiamine diphosphate. A phosphoserine mark is found at S294 and S296. A Phosphoserine; by PDK3 modification is found at S301.

As to quaternary structure, heterotetramer of two PDHA2 and two PDHB subunits. The heterotetramer interacts with DLAT, and is part of the multimeric pyruvate dehydrogenase complex that contains multiple copies of pyruvate dehydrogenase (E1), dihydrolipoamide acetyltransferase (DLAT, E2) and lipoamide dehydrogenase (DLD, E3). These subunits are bound to an inner core composed of about 48 DLAT and 12 PDHX molecules. It depends on thiamine diphosphate as a cofactor. The cofactor is Mg(2+). Testis.

It is found in the mitochondrion matrix. The catalysed reaction is N(6)-[(R)-lipoyl]-L-lysyl-[protein] + pyruvate + H(+) = N(6)-[(R)-S(8)-acetyldihydrolipoyl]-L-lysyl-[protein] + CO2. With respect to regulation, pyruvate dehydrogenase activity is inhibited by phosphorylation of PDHA2; it is reactivated by dephosphorylation. In terms of biological role, the pyruvate dehydrogenase complex catalyzes the overall conversion of pyruvate to acetyl-CoA and CO(2), and thereby links the glycolytic pathway to the tricarboxylic cycle. This chain is Pyruvate dehydrogenase E1 component subunit alpha, testis-specific form, mitochondrial (Pdha2), found in Rattus norvegicus (Rat).